The following is an 802-amino-acid chain: Phenylalanine--tRNA ligase beta subunit (802 aa).

The tRNA-binding domain maps to 38–149 (KSSLKPFVIA…ADAPVGTSFA (112 aa)). The B5 domain occupies 399–474 (HKPKIVSFPI…RIHGVDNIAP (76 aa)). D452, D458, E461, and E462 together coordinate Mg(2+). Residues 708 to 801 (SAFQAVKRDF…VGKQTGGVLR (94 aa)) form the FDX-ACB domain.

It belongs to the phenylalanyl-tRNA synthetase beta subunit family. Type 1 subfamily. Tetramer of two alpha and two beta subunits. Mg(2+) is required as a cofactor.

The protein localises to the cytoplasm. The enzyme catalyses tRNA(Phe) + L-phenylalanine + ATP = L-phenylalanyl-tRNA(Phe) + AMP + diphosphate + H(+). This Mesorhizobium japonicum (strain LMG 29417 / CECT 9101 / MAFF 303099) (Mesorhizobium loti (strain MAFF 303099)) protein is Phenylalanine--tRNA ligase beta subunit.